Reading from the N-terminus, the 225-residue chain is Cardiotrophin-like cytokine factor 1 (225 aa).

A signal peptide spans Met1–Ala27. A glycan (N-linked (GlcNAc...) asparagine) is linked at Asn29.

The protein belongs to the IL-6 superfamily. As to quaternary structure, forms a heteromeric complex with cardiotrophin-like cytokine CRLF1/CLF-1; the CRLF1-CLCF1 complex is a ligand for the ciliary neurotrophic factor receptor/CNTFR. The CRLF1-CLCF1 heterodimer binds SORL1 (via N-terminal ectodomain); within this complex, the interaction is mediated predominantly by the CRLF1 moiety. The tripartite signaling complex formed by CRLF1, CLCF1 and CNTFR also binds SORL1. As to expression, expressed predominantly in lymph nodes, spleen, peripheral blood lymphocytes, bone marrow, and fetal liver.

It is found in the secreted. Functionally, in complex with CRLF1, forms a heterodimeric neurotropic cytokine that plays a crucial role during neuronal development. Also stimulates B-cells. Binds to and activates the ILST/gp130 receptor. This Homo sapiens (Human) protein is Cardiotrophin-like cytokine factor 1 (CLCF1).